A 59-amino-acid polypeptide reads, in one-letter code: Small EDRK-rich factor 2 (59 aa).

Composition is skewed to basic and acidic residues over residues 1-30 (MTRG…RDDG) and 50-59 (KANEKKEEPK). The interval 1–59 (MTRGNQRELARQKNMKKQSDSVKGKRRDDGLSAAARKQRDSEIMQQKQKKANEKKEEPK) is disordered.

This sequence belongs to the SERF family.

In terms of biological role, positive regulator of amyloid protein aggregation and proteotoxicity. Induces conformational changes in amyloid proteins, such as HTT, driving them into compact formations preceding the formation of aggregates. This Plecturocebus moloch (Dusky titi monkey) protein is Small EDRK-rich factor 2 (SERF2).